The chain runs to 199 residues: Thymidine kinase (199 aa).

ATP is bound by residues 15-22 and 88-91; these read GSMFSGKS and DEVQ. Glutamate 89 serves as the catalytic Proton acceptor. Residues cysteine 145, cysteine 148, cysteine 183, and histidine 186 each coordinate Zn(2+).

Belongs to the thymidine kinase family. Homotetramer.

The protein localises to the cytoplasm. The enzyme catalyses thymidine + ATP = dTMP + ADP + H(+). The protein is Thymidine kinase of Staphylococcus aureus (strain Mu50 / ATCC 700699).